A 183-amino-acid chain; its full sequence is MPVLYSTGYDLVNLCIGETKKNIKLTEDILDAGMELDFILREYCDSKLPLEEDPFNDDTGRFYVLDKSQIEDNAWILLYLELVVATSFRNHITHGLTSLKILKVAMEISRSPGVSVNMGLDAYDATFYISYKDFCKARVGKEVDRIALVRRILDPQLEILRLGGYTLSSQTIKPSNTMDAGSF.

It belongs to the UPF0725 (EMB2204) family.

The chain is UPF0725 protein At4g11700 from Arabidopsis thaliana (Mouse-ear cress).